The following is a 113-amino-acid chain: uncharacterized protein (113 aa).

The next 3 membrane-spanning stretches (helical) occupy residues 9–31 (IFPS…SVIY), 36–58 (VLTI…YKFQ), and 71–90 (IMAL…VVAV).

It localises to the cell membrane. This is an uncharacterized protein from Archaeoglobus fulgidus (strain ATCC 49558 / DSM 4304 / JCM 9628 / NBRC 100126 / VC-16).